Here is a 3038-residue protein sequence, read N- to C-terminus: Lovastatin nonaketide synthase, polyketide synthase component (3038 aa).

In terms of domain architecture, Ketosynthase family 3 (KS3) spans 8–447 (NEPIVVVGSG…GTNAHAIIEE (440 aa)). Catalysis depends on for beta-ketoacyl synthase activity residues C181, H320, and H367. The segment at 562-889 (IFTGQGAQWP…GKNDLDSFSR (328 aa)) is malonyl-CoA:ACP transacylase (MAT) domain. S656 serves as the catalytic For malonyltransferase activity. Residues 695–757 (AMLAAGMSFE…DESTFARLLK (63 aa)) are lovC-binding. Positions 953-1089 (HLLLGKLSEY…GQLALTIEDV (137 aa)) are N-terminal hotdog fold. Positions 953–1263 (HLLLGKLSEY…ENITFKPFSP (311 aa)) are dehydratase (DH) domain. The PKS/mFAS DH domain occupies 953-1267 (HLLLGKLSEY…FKPFSPPDAS (315 aa)). Residue H985 is the Proton acceptor; for dehydratase activity of the active site. Residues 1107 to 1267 (EEHPHMNRVN…FKPFSPPDAS (161 aa)) form a C-terminal hotdog fold region. D1174 serves as the catalytic Proton donor; for dehydratase activity. A methyltransferase (CMet) domain region spans residues 1443–1543 (LEIGAGTGGA…ARSLLKPGGQ (101 aa)). Residues 2139-2437 (TLPTRVRSID…KIPEYRGAKA (299 aa)) form a ketoreductase (KR) domain region. The region spanning 2463–2538 (QIVIDGLSAK…DLANEAAARL (76 aa)) is the Carrier domain. S2498 bears the O-(pantetheine 4'-phosphoryl)serine mark. The disordered stretch occupies residues 2546–2602 (VAATDGGAESTDNTSENEVSGREDTDLSAAATITEPSSADEDDTEPGDEDVPRSHHP). The span at 2583–2594 (SADEDDTEPGDE) shows a compositional bias: acidic residues. Residues 2602 to 2952 (PLSLGQEYSW…PTSNQPAPLF (351 aa)) form an inactive Condensation domain region.

Homodimer. Each MAT domain from the lovB homodimer binds one lovC molecule to form the final active lovB-lovC megasynthase complex. Pantetheine 4'-phosphate serves as cofactor.

It carries out the reaction holo-[lovastatin nonaketide synthase] + 9 malonyl-CoA + S-adenosyl-L-methionine + 11 NADPH + 19 H(+) = dihydromonacolin L-[lovastatin nonaketide synthase] + S-adenosyl-L-homocysteine + 9 CO2 + 11 NADP(+) + 9 CoA + 6 H2O. It functions in the pathway polyketide biosynthesis; lovastatin biosynthesis. In terms of biological role, lovastatin nonaketide synthase; part of the gene cluster that mediates the biosynthesis of lovastatin (also known as mevinolin, mevacor or monacolin K), a hypolipidemic inhibitor of (3S)-hydroxymethylglutaryl-coenzyme A (HMG-CoA) reductase (HMGR). The first step in the biosynthesis of lovastatin is the production of dihydromonacolin L acid by the lovastatin nonaketide synthase lovB and the trans-acting enoyl reductase lovC (called the lovB-lovC megasynthase complex) via condensation of one acetyl-CoA unit and 8 malonyl-CoA units. The formation of the LovB/C complex is essential for the integrity of the catalytic chamber to the complete total synthesis of DML acid. Dihydromonacolin L acid is released from lovB by the thioesterase lovG. Next, dihydromonacolin L acid is oxidized by the dihydromonacolin L monooxygenase lovA twice to form monacolin J acid. The 2-methylbutyrate moiety of lovastatin is synthesized by the lovastatin diketide synthase lovF via condensation of one acetyl-CoA unit and one malonyl-CoA unit. Finally, the covalent attachment of this moiety to monacolin J acid is catalyzed by the transesterase lovD to yield lovastatin. LovD has broad substrate specificity and can also convert monacolin J to simvastatin using alpha-dimethylbutanoyl-S-methyl-3-mercaptopropionate (DMB-S-MMP) as the thioester acyl donor, and can also catalyze the reverse reaction and function as hydrolase in vitro. LovD has much higher activity with LovF-bound 2-methylbutanoate than with free diketide substrates. This chain is Lovastatin nonaketide synthase, polyketide synthase component, found in Aspergillus terreus.